A 485-amino-acid chain; its full sequence is Probable glycine dehydrogenase (decarboxylating) subunit 2 (485 aa).

The residue at position 269 (Lys269) is an N6-(pyridoxal phosphate)lysine.

This sequence belongs to the GcvP family. C-terminal subunit subfamily. The glycine cleavage system is composed of four proteins: P, T, L and H. In this organism, the P 'protein' is a heterodimer of two subunits. Pyridoxal 5'-phosphate serves as cofactor.

It catalyses the reaction N(6)-[(R)-lipoyl]-L-lysyl-[glycine-cleavage complex H protein] + glycine + H(+) = N(6)-[(R)-S(8)-aminomethyldihydrolipoyl]-L-lysyl-[glycine-cleavage complex H protein] + CO2. Functionally, the glycine cleavage system catalyzes the degradation of glycine. The P protein binds the alpha-amino group of glycine through its pyridoxal phosphate cofactor; CO(2) is released and the remaining methylamine moiety is then transferred to the lipoamide cofactor of the H protein. The chain is Probable glycine dehydrogenase (decarboxylating) subunit 2 from Chlorobium phaeovibrioides (strain DSM 265 / 1930) (Prosthecochloris vibrioformis (strain DSM 265)).